We begin with the raw amino-acid sequence, 209 residues long: Uracil phosphoribosyltransferase (209 aa).

5-phospho-alpha-D-ribose 1-diphosphate is bound by residues arginine 79, arginine 104, and 131–139 (DPMLATGNS). Uracil is bound by residues isoleucine 194 and 199–201 (GDA). Aspartate 200 provides a ligand contact to 5-phospho-alpha-D-ribose 1-diphosphate.

The protein belongs to the UPRTase family. Mg(2+) serves as cofactor.

It carries out the reaction UMP + diphosphate = 5-phospho-alpha-D-ribose 1-diphosphate + uracil. The protein operates within pyrimidine metabolism; UMP biosynthesis via salvage pathway; UMP from uracil: step 1/1. Its activity is regulated as follows. Allosterically activated by GTP. In terms of biological role, catalyzes the conversion of uracil and 5-phospho-alpha-D-ribose 1-diphosphate (PRPP) to UMP and diphosphate. This chain is Uracil phosphoribosyltransferase, found in Sinorhizobium medicae (strain WSM419) (Ensifer medicae).